The following is a 1119-amino-acid chain: MVPRRSRQRPASSCRTAKTARREMPYPLPAPDGQEPEAQPVTPSPVFPEIEEDVLAFWDRDGTFHASIDNRDGAPEWVFYDGPPFANGLPHYGHLMTGYAKDVFPRYQTMRGKKVERRFGWDTHGLPAELEAERQLGITDKSQIEEMGLAAFNQAAKDSVLKYTREWQQYVTRQARWVDFDNGYKTLDTTYMESVIWAFKQLHEKGLAYEGYRVLPYCWRDQTPLSNHELRMDDDVYKMRQDQTVTVTFPLTGAKAESLGLTGVRVLAWTTTPWTLPTNLALVVGPDIQYAVVPAGPNGAADAHGRPDDEVLSGEYLLAIDLVGNYAKDLGYGSPEAARAAVTRTIPGRELEGVTYDRLWDYYADAATWGTQNAWQILVDGYVTTEDGTGIVHQAPAYGEDDQRVCEAAGIPVIISVDDGARFLPAVQDVAGLQVFEAGKPLIKLLREEGRLLRQASYEHSYPHCWRCRNPLIYKAVSSWFVRVTDFRDRMVALNQEITWVPENVKDGQFGKWLAGARDWSISRNRYFGSPIPVWKSDDPDYPRVDVYGSLAELERDFGRLPLNAAGEPDLHRPFVDDLTRPNPDDPTGRSTMRRIPDVLDVWFDSGSMPFAQVHYPFENSDWFDSHNPADFIVEYIGQARGWFYLLHALSTALFDRPAFTNVISHGIVLGNDGQKVSKSLRNYPDVNDVFDRDGSDAMRWFLMSSPVLRGGNLVVTEEGVREGVRQVLLPLWNTWYFFSLYANATGYEAKRSTASAAVLDRYLLAKTRDLVEAVTADLDALDSTLASAKLRDFADLLTNWYVRRSRDRFWAGVDGEGAGAEAFDTLYTVLETLTRVAAPLLPLVTERIWKDLTGGRSVHLTDWPDAAELPADDALVAAMDRVRAISSTALSLRKQAGLRVRLPLASLTVVAEGAAALAPFEAILRDELNVKAVCLVEGEHSGVDRALTVKARQLGPRIGKRVQEVIRAAKSGDWSEADGVVTAGGVELEPGEYELAVVISAPTARFENGVYIELDTALTPELEAEGLARDIIRAVQDTRKAAGLGVSDRIALTLAFENGGDARVLGLATEVDIASETLARTVQVAAAAGAFVKTFGAGQFANVGDFTVGITKIEEADE.

A disordered region spans residues methionine 1–proline 43. Positions proline 84–histidine 94 match the 'HIGH' region motif. Residues lysine 676 to serine 680 carry the 'KMSKS' region motif. Lysine 679 serves as a coordination point for ATP.

This sequence belongs to the class-I aminoacyl-tRNA synthetase family. IleS type 2 subfamily. Monomer. Requires Zn(2+) as cofactor.

Its subcellular location is the cytoplasm. It carries out the reaction tRNA(Ile) + L-isoleucine + ATP = L-isoleucyl-tRNA(Ile) + AMP + diphosphate. In terms of biological role, catalyzes the attachment of isoleucine to tRNA(Ile). As IleRS can inadvertently accommodate and process structurally similar amino acids such as valine, to avoid such errors it has two additional distinct tRNA(Ile)-dependent editing activities. One activity is designated as 'pretransfer' editing and involves the hydrolysis of activated Val-AMP. The other activity is designated 'posttransfer' editing and involves deacylation of mischarged Val-tRNA(Ile). The polypeptide is Isoleucine--tRNA ligase (Leifsonia xyli subsp. xyli (strain CTCB07)).